Reading from the N-terminus, the 162-residue chain is Protein FAM162B (162 aa).

The interval 26–69 (EATRRPAPALPPRGLPCYSSGGAPSNSGPQGHGEIHRVPTQRRP) is disordered. Residues 107–127 (VKACYIMIGLTIIACFAVIVS) form a helical membrane-spanning segment.

The protein belongs to the UPF0389 family.

The protein localises to the membrane. In Homo sapiens (Human), this protein is Protein FAM162B (FAM162B).